The primary structure comprises 538 residues: Putative cysteine ligase BshC (538 aa).

Residues K460–L484 are a coiled coil.

This sequence belongs to the BshC family.

In terms of biological role, involved in bacillithiol (BSH) biosynthesis. May catalyze the last step of the pathway, the addition of cysteine to glucosamine malate (GlcN-Mal) to generate BSH. The chain is Putative cysteine ligase BshC from Bacillus cereus (strain ZK / E33L).